Consider the following 1067-residue polypeptide: Mediator of RNA polymerase II transcription subunit 5 (1067 aa).

This sequence belongs to the Mediator complex subunit 5 family. As to quaternary structure, component of the Mediator complex.

The protein resides in the nucleus. Its function is as follows. Component of the Mediator complex, a coactivator involved in the regulated transcription of nearly all RNA polymerase II-dependent genes. Mediator functions as a bridge to convey information from gene-specific regulatory proteins to the basal RNA polymerase II transcription machinery. Mediator is recruited to promoters by direct interactions with regulatory proteins and serves as a scaffold for the assembly of a functional preinitiation complex with RNA polymerase II and the general transcription factors. The sequence is that of Mediator of RNA polymerase II transcription subunit 5 (NUT1) from Kluyveromyces lactis (strain ATCC 8585 / CBS 2359 / DSM 70799 / NBRC 1267 / NRRL Y-1140 / WM37) (Yeast).